We begin with the raw amino-acid sequence, 230 residues long: Cytidylate kinase (230 aa).

Residue 17–25 (GPTASGKGT) participates in ATP binding.

The protein belongs to the cytidylate kinase family. Type 1 subfamily.

The protein localises to the cytoplasm. It carries out the reaction CMP + ATP = CDP + ADP. The catalysed reaction is dCMP + ATP = dCDP + ADP. In Ralstonia nicotianae (strain ATCC BAA-1114 / GMI1000) (Ralstonia solanacearum), this protein is Cytidylate kinase.